Here is a 182-residue protein sequence, read N- to C-terminus: Ribulose bisphosphate carboxylase small subunit, chloroplastic 4 (182 aa).

Residues 1-41 (MAATMMNKTVVLSKGCTKPSAVPKVSINRKGFLNTAMNKKR) constitute a chloroplast transit peptide.

Belongs to the RuBisCO small chain family. As to quaternary structure, heterohexadecamer of 8 large and 8 small subunits.

The protein resides in the plastid. It localises to the chloroplast. Its function is as follows. RuBisCO catalyzes two reactions: the carboxylation of D-ribulose 1,5-bisphosphate, the primary event in carbon dioxide fixation, as well as the oxidative fragmentation of the pentose substrate. Both reactions occur simultaneously and in competition at the same active site. Although the small subunit is not catalytic it is essential for maximal activity. This chain is Ribulose bisphosphate carboxylase small subunit, chloroplastic 4, found in Acetabularia peniculus (Green alga).